A 542-amino-acid polypeptide reads, in one-letter code: Thermosome subunit (542 aa).

It belongs to the TCP-1 chaperonin family. Forms an oligomeric complex of eight-membered rings.

Functionally, molecular chaperone; binds unfolded polypeptides in vitro, and has a weak ATPase activity. This is Thermosome subunit (ths) from Methanocaldococcus jannaschii (strain ATCC 43067 / DSM 2661 / JAL-1 / JCM 10045 / NBRC 100440) (Methanococcus jannaschii).